We begin with the raw amino-acid sequence, 179 residues long: MKQFLDFLPLIVFFAFYKLYDIYVASGALIVATALALVFTWFKYRKIEKMTLITFLMVLVFGTLTLVFHNDLFIKWKVTIIYTLFALALLISQLVLKKPLVQRMLGKELTLPDKVWNSLNLAWAVFFLVCGLANIYVAFWLPQSVWVNFKVFGLTALTLVFTLLSGVYIYRHMPEEQKK.

The next 5 helical transmembrane spans lie at I22 to F42, M50 to N70, W76 to L96, L121 to L141, and F149 to I169.

This sequence belongs to the YciB family.

It is found in the cell inner membrane. Its function is as follows. Plays a role in cell envelope biogenesis, maintenance of cell envelope integrity and membrane homeostasis. The chain is Inner membrane-spanning protein YciB from Serratia proteamaculans (strain 568).